We begin with the raw amino-acid sequence, 460 residues long: Bifunctional protein GlmU (460 aa).

The pyrophosphorylase stretch occupies residues 1 to 229 (MKNYAIILAA…FDESLGVNDR (229 aa)). Residues 8–11 (LAAG), K22, Q72, and 77–78 (GT) contribute to the UDP-N-acetyl-alpha-D-glucosamine site. Position 102 (D102) interacts with Mg(2+). Positions 139, 154, 169, and 227 each coordinate UDP-N-acetyl-alpha-D-glucosamine. Position 227 (N227) interacts with Mg(2+). The segment at 230-250 (LALAQAEVIMQERINKQHMLN) is linker. The segment at 251–460 (GVTLQNPAAT…RLPHHPDQPQ (210 aa)) is N-acetyltransferase. R332 and K350 together coordinate UDP-N-acetyl-alpha-D-glucosamine. The Proton acceptor role is filled by H362. Positions 365 and 376 each coordinate UDP-N-acetyl-alpha-D-glucosamine. Residues A379, 385–386 (NY), S404, A422, and R439 contribute to the acetyl-CoA site.

The protein in the N-terminal section; belongs to the N-acetylglucosamine-1-phosphate uridyltransferase family. In the C-terminal section; belongs to the transferase hexapeptide repeat family. As to quaternary structure, homotrimer. The cofactor is Mg(2+).

The protein localises to the cytoplasm. It carries out the reaction alpha-D-glucosamine 1-phosphate + acetyl-CoA = N-acetyl-alpha-D-glucosamine 1-phosphate + CoA + H(+). The enzyme catalyses N-acetyl-alpha-D-glucosamine 1-phosphate + UTP + H(+) = UDP-N-acetyl-alpha-D-glucosamine + diphosphate. It functions in the pathway nucleotide-sugar biosynthesis; UDP-N-acetyl-alpha-D-glucosamine biosynthesis; N-acetyl-alpha-D-glucosamine 1-phosphate from alpha-D-glucosamine 6-phosphate (route II): step 2/2. Its pathway is nucleotide-sugar biosynthesis; UDP-N-acetyl-alpha-D-glucosamine biosynthesis; UDP-N-acetyl-alpha-D-glucosamine from N-acetyl-alpha-D-glucosamine 1-phosphate: step 1/1. The protein operates within bacterial outer membrane biogenesis; LPS lipid A biosynthesis. Catalyzes the last two sequential reactions in the de novo biosynthetic pathway for UDP-N-acetylglucosamine (UDP-GlcNAc). The C-terminal domain catalyzes the transfer of acetyl group from acetyl coenzyme A to glucosamine-1-phosphate (GlcN-1-P) to produce N-acetylglucosamine-1-phosphate (GlcNAc-1-P), which is converted into UDP-GlcNAc by the transfer of uridine 5-monophosphate (from uridine 5-triphosphate), a reaction catalyzed by the N-terminal domain. In Streptococcus equi subsp. zooepidemicus (strain ATCC 35246 / C74-63), this protein is Bifunctional protein GlmU.